A 191-amino-acid polypeptide reads, in one-letter code: Protein Ves (191 aa).

This sequence belongs to the Ves family.

The sequence is that of Protein Ves from Escherichia coli O127:H6 (strain E2348/69 / EPEC).